The sequence spans 138 residues: Ribulose bisphosphate carboxylase small subunit (138 aa).

The protein belongs to the RuBisCO small chain family. In terms of assembly, heterohexadecamer of 8 large and 8 small subunits.

It localises to the plastid. The protein resides in the chloroplast. Its function is as follows. RuBisCO catalyzes two reactions: the carboxylation of D-ribulose 1,5-bisphosphate, the primary event in carbon dioxide fixation, as well as the oxidative fragmentation of the pentose substrate in the photorespiration process. Both reactions occur simultaneously and in competition at the same active site. Although the small subunit is not catalytic it is essential for maximal activity. The polypeptide is Ribulose bisphosphate carboxylase small subunit (Pyropia katadae (Red alga)).